Reading from the N-terminus, the 360-residue chain is Phospho-N-acetylmuramoyl-pentapeptide-transferase (360 aa).

Transmembrane regions (helical) follow at residues 21 to 41 (YLSF…LWMG), 73 to 93 (TMGG…WADL), 94 to 114 (TNPY…VGFV), 132 to 152 (WKYF…YAHG), 168 to 188 (VMPQ…VGTS), 199 to 219 (GLAI…AWAT), 239 to 259 (LVVV…FNTY), 263 to 283 (VFMG…IAVL), 288 to 308 (FVLV…ILQV), and 338 to 358 (VIVR…ATLK).

The protein belongs to the glycosyltransferase 4 family. MraY subfamily. Mg(2+) serves as cofactor.

The protein localises to the cell inner membrane. The enzyme catalyses UDP-N-acetyl-alpha-D-muramoyl-L-alanyl-gamma-D-glutamyl-meso-2,6-diaminopimeloyl-D-alanyl-D-alanine + di-trans,octa-cis-undecaprenyl phosphate = di-trans,octa-cis-undecaprenyl diphospho-N-acetyl-alpha-D-muramoyl-L-alanyl-D-glutamyl-meso-2,6-diaminopimeloyl-D-alanyl-D-alanine + UMP. It functions in the pathway cell wall biogenesis; peptidoglycan biosynthesis. Its function is as follows. Catalyzes the initial step of the lipid cycle reactions in the biosynthesis of the cell wall peptidoglycan: transfers peptidoglycan precursor phospho-MurNAc-pentapeptide from UDP-MurNAc-pentapeptide onto the lipid carrier undecaprenyl phosphate, yielding undecaprenyl-pyrophosphoryl-MurNAc-pentapeptide, known as lipid I. This is Phospho-N-acetylmuramoyl-pentapeptide-transferase from Vibrio cholerae serotype O1 (strain ATCC 39541 / Classical Ogawa 395 / O395).